We begin with the raw amino-acid sequence, 466 residues long: Probable Xaa-Pro aminopeptidase pepP (466 aa).

Mn(2+) contacts are provided by Asp-264, Asp-275, Glu-398, and Glu-438.

Belongs to the peptidase M24B family. The cofactor is Mn(2+).

The catalysed reaction is Release of any N-terminal amino acid, including proline, that is linked to proline, even from a dipeptide or tripeptide.. Catalyzes the removal of a penultimate prolyl residue from the N-termini of peptides. The protein is Probable Xaa-Pro aminopeptidase pepP (pepP) of Aspergillus terreus (strain NIH 2624 / FGSC A1156).